We begin with the raw amino-acid sequence, 203 residues long: Snake venom metalloproteinase atroxase (203 aa).

Glutamate 1 carries the pyrrolidone carboxylic acid (Glu) modification. Residue asparagine 5 is glycosylated (N-linked (GlcNAc...) asparagine). Residues 9–203 form the Peptidase M12B domain; sequence RYIELVVVAD…KQYNPQIXNK (195 aa). Glutamate 12 and aspartate 96 together coordinate Ca(2+). Histidine 145 provides a ligand contact to Zn(2+). Glutamate 146 is a catalytic residue. The Zn(2+) site is built by histidine 149 and histidine 155. Cysteine 160 and cysteine 167 are joined by a disulfide. Asparagine 202 is a Ca(2+) binding site.

It belongs to the venom metalloproteinase (M12B) family. P-I subfamily. As to quaternary structure, monomer. The cofactor is Zn(2+). The N-terminus is blocked. In terms of tissue distribution, expressed by the venom gland.

It localises to the secreted. The enzyme catalyses Cleavage of 5-His-|-Leu-6, 9-Ser-|-His-10, 10-His-|-Leu-11, 14-Ala-|-Leu-15 and 16-Tyr-|-Leu-17 in insulin B chain.. Inhibited by EDTA and alpha2-macroglobulin. In terms of biological role, snake venom zinc metalloprotease that has Aalpha, Bbeta fibrin(ogen)olytic activities. It cleaves the Aalpha chain of fibrinogen first followed by the Bbeta chain and shows no effect on the gamma chain. Does not induce or inhibit platelet aggregation, and is unable to activate plasminogen. Exhibits low lethality when tested on mice. Intravenous administration results in thrombolysis within one hour followed by recanalization. Fibrinogenolytic activity results in a 60% decrease in the rat's plasma fibrinogen level. Histological examination of kidney, liver, heart and lung tissue shows no necrosis nor hemorrhage. The sequence is that of Snake venom metalloproteinase atroxase from Crotalus atrox (Western diamondback rattlesnake).